The primary structure comprises 643 residues: Protein disulfide-isomerase A4 (643 aa).

An N-terminal signal peptide occupies residues 1-20; sequence MRPRKAWMLVLLLALVQLLA. 2 consecutive Thioredoxin domains span residues 21 to 168 and 170 to 300; these read VASA…EVSQ and NWTP…EFLK. A disordered region spans residues 24–54; that stretch reads AGAPDEDSTDKEDAIEEDEEEDEDDDDDDDD. Residues 27–54 are compositionally biased toward acidic residues; sequence PDEDSTDKEDAIEEDEEEDEDDDDDDDD. The CXXC signature appears at 90-93; that stretch reads CGHC. Intrachain disulfides connect C90-C93 and C205-C208. Residue K365 is modified to N6-acetyllysine. The Thioredoxin 3 domain maps to 503-634; it reads FKKGKLKPVI…LSKFIEEHAT (132 aa). Residues 553-556 carry the CXXC motif; that stretch reads CGHC. The cysteines at positions 553 and 556 are disulfide-linked. Positions 640–643 match the Prevents secretion from ER motif; the sequence is KEEL.

Belongs to the protein disulfide isomerase family. As to quaternary structure, part of a large chaperone multiprotein complex comprising DNAJB11, HSP90B1, HSPA5, HYOU, PDIA2, PDIA4, PDIA6, PPIB, SDF2L1, UGGT1 and very small amounts of ERP29, but not, or at very low levels, CALR nor CANX. Component of a complex containing at least CRELD2, MANF, MATN3 and PDIA4.

The protein resides in the endoplasmic reticulum lumen. It is found in the melanosome. It catalyses the reaction Catalyzes the rearrangement of -S-S- bonds in proteins.. The protein is Protein disulfide-isomerase A4 (PDIA4) of Bos taurus (Bovine).